Here is a 217-residue protein sequence, read N- to C-terminus: 3-demethoxyubiquinol 3-hydroxylase (217 aa).

Fe cation-binding residues include E66, E96, H99, E148, E180, and H183.

It belongs to the COQ7 family. Requires Fe cation as cofactor.

It is found in the cell membrane. The enzyme catalyses a 5-methoxy-2-methyl-3-(all-trans-polyprenyl)benzene-1,4-diol + AH2 + O2 = a 3-demethylubiquinol + A + H2O. The protein operates within cofactor biosynthesis; ubiquinone biosynthesis. Its function is as follows. Catalyzes the hydroxylation of 2-nonaprenyl-3-methyl-6-methoxy-1,4-benzoquinol during ubiquinone biosynthesis. The sequence is that of 3-demethoxyubiquinol 3-hydroxylase from Xanthomonas campestris pv. campestris (strain 8004).